Consider the following 171-residue polypeptide: tRNA-splicing endonuclease (171 aa).

Catalysis depends on residues Y110, H117, and K148.

Belongs to the tRNA-intron endonuclease family. Archaeal short subfamily. As to quaternary structure, homotetramer; although the tetramer contains four active sites, only two participate in the cleavage. Therefore, it should be considered as a dimer of dimers.

It catalyses the reaction pretRNA = a 3'-half-tRNA molecule with a 5'-OH end + a 5'-half-tRNA molecule with a 2',3'-cyclic phosphate end + an intron with a 2',3'-cyclic phosphate and a 5'-hydroxyl terminus.. Endonuclease that removes tRNA introns. Cleaves pre-tRNA at the 5'- and 3'-splice sites to release the intron. The products are an intron and two tRNA half-molecules bearing 2',3' cyclic phosphate and 5'-OH termini. Recognizes a pseudosymmetric substrate in which 2 bulged loops of 3 bases are separated by a stem of 4 bp. In Thermococcus onnurineus (strain NA1), this protein is tRNA-splicing endonuclease.